Here is a 466-residue protein sequence, read N- to C-terminus: tRNA-2-methylthio-N(6)-dimethylallyladenosine synthase (466 aa).

In terms of domain architecture, MTTase N-terminal spans 22–139; the sequence is RRYYVWTVGC…VVALAPNPIY (118 aa). Positions 31, 67, 101, 166, 170, and 173 each coordinate [4Fe-4S] cluster. One can recognise a Radical SAM core domain in the interval 152 to 386; it reads SHPPVSVHVP…EQLQEQIATE (235 aa). Positions 389–449 constitute a TRAM domain; sequence ARFLGQTVEV…PWSLQGVPQL (61 aa).

This sequence belongs to the methylthiotransferase family. MiaB subfamily. In terms of assembly, monomer. [4Fe-4S] cluster serves as cofactor.

It is found in the cytoplasm. The enzyme catalyses N(6)-dimethylallyladenosine(37) in tRNA + (sulfur carrier)-SH + AH2 + 2 S-adenosyl-L-methionine = 2-methylsulfanyl-N(6)-dimethylallyladenosine(37) in tRNA + (sulfur carrier)-H + 5'-deoxyadenosine + L-methionine + A + S-adenosyl-L-homocysteine + 2 H(+). Functionally, catalyzes the methylthiolation of N6-(dimethylallyl)adenosine (i(6)A), leading to the formation of 2-methylthio-N6-(dimethylallyl)adenosine (ms(2)i(6)A) at position 37 in tRNAs that read codons beginning with uridine. This Chloroflexus aurantiacus (strain ATCC 29366 / DSM 635 / J-10-fl) protein is tRNA-2-methylthio-N(6)-dimethylallyladenosine synthase.